A 387-amino-acid chain; its full sequence is Exodeoxyribonuclease 7 large subunit (387 aa).

Belongs to the XseA family. As to quaternary structure, heterooligomer composed of large and small subunits.

It localises to the cytoplasm. The enzyme catalyses Exonucleolytic cleavage in either 5'- to 3'- or 3'- to 5'-direction to yield nucleoside 5'-phosphates.. Functionally, bidirectionally degrades single-stranded DNA into large acid-insoluble oligonucleotides, which are then degraded further into small acid-soluble oligonucleotides. The protein is Exodeoxyribonuclease 7 large subunit of Synechococcus sp. (strain CC9902).